Reading from the N-terminus, the 140-residue chain is Small ribosomal subunit protein uS12 (140 aa).

At Asp102 the chain carries 3-methylthioaspartic acid.

This sequence belongs to the universal ribosomal protein uS12 family. In terms of assembly, part of the 30S ribosomal subunit. Contacts proteins S8 and S17. May interact with IF1 in the 30S initiation complex.

In terms of biological role, with S4 and S5 plays an important role in translational accuracy. Functionally, interacts with and stabilizes bases of the 16S rRNA that are involved in tRNA selection in the A site and with the mRNA backbone. Located at the interface of the 30S and 50S subunits, it traverses the body of the 30S subunit contacting proteins on the other side and probably holding the rRNA structure together. The combined cluster of proteins S8, S12 and S17 appears to hold together the shoulder and platform of the 30S subunit. The sequence is that of Small ribosomal subunit protein uS12 from Geobacillus sp. (strain WCH70).